The chain runs to 577 residues: Arginine--tRNA ligase (577 aa).

The 'HIGH' region signature appears at 122–132 (PNVAKEMHVGH).

The protein belongs to the class-I aminoacyl-tRNA synthetase family. In terms of assembly, monomer.

It localises to the cytoplasm. The enzyme catalyses tRNA(Arg) + L-arginine + ATP = L-arginyl-tRNA(Arg) + AMP + diphosphate. This is Arginine--tRNA ligase from Vibrio parahaemolyticus serotype O3:K6 (strain RIMD 2210633).